A 284-amino-acid chain; its full sequence is Four and a half LIM domains protein 5 (284 aa).

Residues 8–32 (CQYCMASLLGKKYVLKDDNPYCVSC) form a C4-type zinc finger. 4 consecutive LIM zinc-binding domains span residues 39-100 (NYCE…ECSS), 101-160 (KCFH…KEFA), 161-220 (HYCS…LYAK), and 223-283 (AACT…VDTD).

Interacts with CREM (via the third LIM domain). Interacts (via second LIM domain) with SPAG8.

It localises to the nucleus. In terms of biological role, may be involved in the regulation of spermatogenesis. Stimulates CREM transcriptional activity in a phosphorylation-independent manner. The sequence is that of Four and a half LIM domains protein 5 (FHL5) from Bos taurus (Bovine).